The sequence spans 741 residues: NAD(P)H-quinone oxidoreductase subunit 5, chloroplastic (741 aa).

16 consecutive transmembrane segments (helical) span residues 9 to 29 (WIIPFLPLPVPMLIGLGLLLF), 40 to 60 (WAFQSVLLLSIVMIFSMNLSI), 89 to 109 (IDPLTSIMSILITTVGIMVLI), 125 to 145 (FAYMSFFSTSMLGLVTSSNLI), 147 to 167 (IYIFWELVGMCSYLLIGFWFT), 185 to 205 (GDFGLLLGILGFYWITGSFEF), 219 to 239 (NEVNFVFVTLCAILLFAGAIA), 258 to 278 (TPISALIHAATMVAAGIFPVA), 284 to 304 (FIVIPHIMNFISLIGIITVFF), 327 to 347 (LGYMMLALGMGSYRSALFHLI), 354 to 374 (ALLFLGSGSVIHSMETLVGYC), 396 to 416 (NSFLLGTLSLCGIPPLACFWS), 425 to 445 (WLYSPIFAIIAWSTAGLTAFY), 549 to 569 (LFPILILILFTLFVGFLGIPF), 605 to 625 (VFSVSIAFFGIFIAFFLYKPV), and 721 to 741 (YLFFYFSYVSIFLLIYYFLNL).

This sequence belongs to the complex I subunit 5 family. As to quaternary structure, NDH is composed of at least 16 different subunits, 5 of which are encoded in the nucleus.

Its subcellular location is the plastid. The protein resides in the chloroplast thylakoid membrane. The catalysed reaction is a plastoquinone + NADH + (n+1) H(+)(in) = a plastoquinol + NAD(+) + n H(+)(out). It carries out the reaction a plastoquinone + NADPH + (n+1) H(+)(in) = a plastoquinol + NADP(+) + n H(+)(out). NDH shuttles electrons from NAD(P)H:plastoquinone, via FMN and iron-sulfur (Fe-S) centers, to quinones in the photosynthetic chain and possibly in a chloroplast respiratory chain. The immediate electron acceptor for the enzyme in this species is believed to be plastoquinone. Couples the redox reaction to proton translocation, and thus conserves the redox energy in a proton gradient. This Guizotia abyssinica (Niger) protein is NAD(P)H-quinone oxidoreductase subunit 5, chloroplastic (ndhF).